A 626-amino-acid chain; its full sequence is Hemocyanin AA6 chain (626 aa).

Residues His-170, His-174, His-201, His-321, His-325, and His-361 each coordinate Cu cation. Residue Ser-374 is modified to Phosphoserine.

Belongs to the tyrosinase family. Hemocyanin subfamily. Scorpion hemocyanin is a 24-chain polymer with 8 different chains identified, assembled in hexameric substructures. Post-translationally, three disulfide bonds are present. Hemolymph.

The protein localises to the secreted. It localises to the extracellular space. Hemocyanins are copper-containing oxygen carriers occurring freely dissolved in the hemolymph of many mollusks and arthropods. The sequence is that of Hemocyanin AA6 chain from Androctonus australis (Sahara scorpion).